A 456-amino-acid chain; its full sequence is F-box/FBD/LRR-repeat protein At3g52680 (456 aa).

Positions 20–73 (KDRISELPDGLLLKILSSLPTNIVVATSVLSKQWRSLWKLVPNLEFDSDDYESE) constitute an F-box domain. LRR repeat units lie at residues 74-100 (HYTF…RLKF), 102-127 (NFNP…VLDF), 152-179 (TLKL…HLEF), 180-205 (VRYK…RLYR), 225-252 (TIHD…LIEE), 270-295 (IAEV…LLNL), and 318-344 (TREA…KLTD). Positions 358 to 409 (KWNEPKDVPECLLSQLETFVWRRFDWGREEEKEIATYILKNGRRLKKATFST) constitute an FBD domain.

The polypeptide is F-box/FBD/LRR-repeat protein At3g52680 (Arabidopsis thaliana (Mouse-ear cress)).